The sequence spans 333 residues: Tetraacyldisaccharide 4'-kinase (333 aa).

55–62 (TAGGNGKT) contacts ATP.

Belongs to the LpxK family.

It catalyses the reaction a lipid A disaccharide + ATP = a lipid IVA + ADP + H(+). Its pathway is glycolipid biosynthesis; lipid IV(A) biosynthesis; lipid IV(A) from (3R)-3-hydroxytetradecanoyl-[acyl-carrier-protein] and UDP-N-acetyl-alpha-D-glucosamine: step 6/6. Functionally, transfers the gamma-phosphate of ATP to the 4'-position of a tetraacyldisaccharide 1-phosphate intermediate (termed DS-1-P) to form tetraacyldisaccharide 1,4'-bis-phosphate (lipid IVA). The protein is Tetraacyldisaccharide 4'-kinase of Pectobacterium carotovorum subsp. carotovorum (strain PC1).